The following is a 901-amino-acid chain: Alanine--tRNA ligase (901 aa).

4 residues coordinate Zn(2+): H600, H604, C704, and H708.

The protein belongs to the class-II aminoacyl-tRNA synthetase family. It depends on Zn(2+) as a cofactor.

Its subcellular location is the cytoplasm. The enzyme catalyses tRNA(Ala) + L-alanine + ATP = L-alanyl-tRNA(Ala) + AMP + diphosphate. Catalyzes the attachment of alanine to tRNA(Ala) in a two-step reaction: alanine is first activated by ATP to form Ala-AMP and then transferred to the acceptor end of tRNA(Ala). Also edits incorrectly charged Ser-tRNA(Ala) and Gly-tRNA(Ala) via its editing domain. The sequence is that of Alanine--tRNA ligase from Ignicoccus hospitalis (strain KIN4/I / DSM 18386 / JCM 14125).